The following is an 801-amino-acid chain: Protocadherin beta-8 (801 aa).

The N-terminal stretch at 1 to 29 (MEASGKLICRQRQVLFSFLLLGLSLAGAA) is a signal peptide. Residues 30–691 (EPRSYSVVEE…GQADSLTVYL (662 aa)) lie on the Extracellular side of the membrane. 5 consecutive Cadherin domains span residues 36–134 (VVEE…SPVF), 139–243 (MLVK…APEF), 248–348 (YRVQ…APEV), 353–452 (FTSP…APAF), and 457–562 (YTLF…SPFV). An intrachain disulfide couples C97 to C103. N-linked (GlcNAc...) asparagine glycosylation is found at N419 and N437. N568 carries N-linked (GlcNAc...) asparagine glycosylation. The Cadherin 6 domain occupies 569–672 (GSAPCTELVP…LVDGFSQPYL (104 aa)). Residues 692 to 710 (VVALASVSSLFLFSVLLFV) form a helical membrane-spanning segment. At 711-801 (AVLLCRRSRA…NGFGFSLQLK (91 aa)) the chain is on the cytoplasmic side.

Forms homodimers in trans (molecules expressed by two different cells). Forms promiscuous heterodimers in cis (at the plasma membrane of the same cell) with other protocadherins.

It localises to the cell membrane. Functionally, calcium-dependent cell-adhesion protein involved in cells self-recognition and non-self discrimination. Thereby, it is involved in the establishment and maintenance of specific neuronal connections in the brain. In Homo sapiens (Human), this protein is Protocadherin beta-8.